Consider the following 390-residue polypeptide: Galactokinase (390 aa).

Residue 33–36 (EHTD) coordinates substrate. ATP-binding positions include Ser67 and 124–130 (GAGLSSS). Mg(2+) is bound by residues Ser130 and Glu162. Asp174 (proton acceptor) is an active-site residue. Tyr224 lines the substrate pocket.

It belongs to the GHMP kinase family. GalK subfamily.

Its subcellular location is the cytoplasm. The catalysed reaction is alpha-D-galactose + ATP = alpha-D-galactose 1-phosphate + ADP + H(+). It functions in the pathway carbohydrate metabolism; galactose metabolism. Its function is as follows. Catalyzes the transfer of the gamma-phosphate of ATP to D-galactose to form alpha-D-galactose-1-phosphate (Gal-1-P). The chain is Galactokinase from Bacillus subtilis (strain 168).